We begin with the raw amino-acid sequence, 734 residues long: Photosystem I P700 chlorophyll a apoprotein A2 (734 aa).

The next 8 helical transmembrane spans lie at 46–69, 135–158, 175–199, 273–291, 330–353, 369–395, 417–439, and 517–535; these read IFAS…FHVA, LYTG…LHLQ, LNHH…HVAI, IAHH…GHMY, LHFQ…QHMY, AALY…IFFI, AIIS…LYVH, and FLVH…LILV. Positions 559 and 568 each coordinate [4Fe-4S] cluster. Helical transmembrane passes span 575 to 596 and 643 to 665; these read AFYL…YWHW and LSVW…MFLI. Chlorophyll a is bound by residues histidine 654, methionine 662, and tyrosine 670. Tryptophan 671 contacts phylloquinone. Residues 707-727 traverse the membrane as a helical segment; the sequence is LVGLAHFSVGYIFTYAAFLIA.

Belongs to the PsaA/PsaB family. In terms of assembly, the PsaA/B heterodimer binds the P700 chlorophyll special pair and subsequent electron acceptors. PSI consists of a core antenna complex that captures photons, and an electron transfer chain that converts photonic excitation into a charge separation. The eukaryotic PSI reaction center is composed of at least 11 subunits. The cofactor is P700 is a chlorophyll a/chlorophyll a' dimer, A0 is one or more chlorophyll a, A1 is one or both phylloquinones and FX is a shared 4Fe-4S iron-sulfur center..

Its subcellular location is the plastid. It localises to the chloroplast thylakoid membrane. The enzyme catalyses reduced [plastocyanin] + hnu + oxidized [2Fe-2S]-[ferredoxin] = oxidized [plastocyanin] + reduced [2Fe-2S]-[ferredoxin]. Functionally, psaA and PsaB bind P700, the primary electron donor of photosystem I (PSI), as well as the electron acceptors A0, A1 and FX. PSI is a plastocyanin-ferredoxin oxidoreductase, converting photonic excitation into a charge separation, which transfers an electron from the donor P700 chlorophyll pair to the spectroscopically characterized acceptors A0, A1, FX, FA and FB in turn. Oxidized P700 is reduced on the lumenal side of the thylakoid membrane by plastocyanin. In Coffea arabica (Arabian coffee), this protein is Photosystem I P700 chlorophyll a apoprotein A2.